The chain runs to 74 residues: Exodeoxyribonuclease 7 small subunit (74 aa).

This sequence belongs to the XseB family. As to quaternary structure, heterooligomer composed of large and small subunits.

The protein resides in the cytoplasm. It carries out the reaction Exonucleolytic cleavage in either 5'- to 3'- or 3'- to 5'-direction to yield nucleoside 5'-phosphates.. Functionally, bidirectionally degrades single-stranded DNA into large acid-insoluble oligonucleotides, which are then degraded further into small acid-soluble oligonucleotides. The chain is Exodeoxyribonuclease 7 small subunit from Neisseria meningitidis serogroup C / serotype 2a (strain ATCC 700532 / DSM 15464 / FAM18).